The primary structure comprises 645 residues: Sister chromatid cohesion protein 1 (645 aa).

Disordered regions lie at residues Phe292–Glu311, Gln495–Glu527, and Cys619–Val645.

The protein belongs to the rad21 family. In terms of assembly, component of the cohesin complex, composed of the smc-1 and smc-3 heterodimer attached via their hinge domain, scc-1 which links them, and scc-3. Interacts with smc-1, smc-3, scc-3 and tim-1.

It is found in the nucleus. The protein resides in the chromosome. Its subcellular location is the cytoplasm. Cleavable component of the cohesin complex involved in chromosome cohesion during cell cycle. The cohesin complex is required for the cohesion of sister chromatids after DNA replication. The cohesin complex apparently forms a large proteinaceous ring within which sister chromatids can be trapped. At metaphase-anaphase transition, this protein is cleaved and dissociates from chromatin, allowing sister chromatids to segregate. In Caenorhabditis elegans, this protein is Sister chromatid cohesion protein 1.